Consider the following 462-residue polypeptide: Proline--tRNA ligase (462 aa).

It belongs to the class-II aminoacyl-tRNA synthetase family. ProS type 3 subfamily. In terms of assembly, homodimer.

The protein resides in the cytoplasm. It catalyses the reaction tRNA(Pro) + L-proline + ATP = L-prolyl-tRNA(Pro) + AMP + diphosphate. Its function is as follows. Catalyzes the attachment of proline to tRNA(Pro) in a two-step reaction: proline is first activated by ATP to form Pro-AMP and then transferred to the acceptor end of tRNA(Pro). The protein is Proline--tRNA ligase of Thermoplasma acidophilum (strain ATCC 25905 / DSM 1728 / JCM 9062 / NBRC 15155 / AMRC-C165).